The chain runs to 294 residues: Acetylglutamate kinase (294 aa).

Substrate-binding positions include 63–64 (GG), R85, and N188.

This sequence belongs to the acetylglutamate kinase family. ArgB subfamily.

It localises to the cytoplasm. It catalyses the reaction N-acetyl-L-glutamate + ATP = N-acetyl-L-glutamyl 5-phosphate + ADP. It functions in the pathway amino-acid biosynthesis; L-arginine biosynthesis; N(2)-acetyl-L-ornithine from L-glutamate: step 2/4. Functionally, catalyzes the ATP-dependent phosphorylation of N-acetyl-L-glutamate. This chain is Acetylglutamate kinase, found in Methanococcus maripaludis (strain C6 / ATCC BAA-1332).